The sequence spans 360 residues: Dual-specificity RNA methyltransferase RlmN (360 aa).

Glu89 (proton acceptor) is an active-site residue. A Radical SAM core domain is found at 95 to 330; that stretch reads DSGRGTLCVS…TRVTRGQDID (236 aa). A disulfide bridge links Cys102 with Cys333. Residues Cys109, Cys113, and Cys116 each contribute to the [4Fe-4S] cluster site. S-adenosyl-L-methionine is bound by residues 159 to 160, Ser191, 213 to 215, and Asn290; these read GE and SLH. Catalysis depends on Cys333, which acts as the S-methylcysteine intermediate.

It belongs to the radical SAM superfamily. RlmN family. [4Fe-4S] cluster is required as a cofactor.

It is found in the cytoplasm. The catalysed reaction is adenosine(2503) in 23S rRNA + 2 reduced [2Fe-2S]-[ferredoxin] + 2 S-adenosyl-L-methionine = 2-methyladenosine(2503) in 23S rRNA + 5'-deoxyadenosine + L-methionine + 2 oxidized [2Fe-2S]-[ferredoxin] + S-adenosyl-L-homocysteine. It catalyses the reaction adenosine(37) in tRNA + 2 reduced [2Fe-2S]-[ferredoxin] + 2 S-adenosyl-L-methionine = 2-methyladenosine(37) in tRNA + 5'-deoxyadenosine + L-methionine + 2 oxidized [2Fe-2S]-[ferredoxin] + S-adenosyl-L-homocysteine. Functionally, specifically methylates position 2 of adenine 2503 in 23S rRNA and position 2 of adenine 37 in tRNAs. m2A2503 modification seems to play a crucial role in the proofreading step occurring at the peptidyl transferase center and thus would serve to optimize ribosomal fidelity. This Alkalilimnicola ehrlichii (strain ATCC BAA-1101 / DSM 17681 / MLHE-1) protein is Dual-specificity RNA methyltransferase RlmN.